The sequence spans 589 residues: O-fucosyltransferase 11 (589 aa).

The segment at 1–37 (MKSKIHHQPNGSNNGVVSSNDNGCRSESPSPPLSPNR) is disordered. Low complexity predominate over residues 10–23 (NGSNNGVVSSNDNG). Residues 68–88 (MIYASGLLMCVGPFSGLVGWV) form a helical; Signal-anchor for type II membrane protein membrane-spanning segment. Asn112, Asn136, and Asn239 each carry an N-linked (GlcNAc...) asparagine glycan. Residue 332–334 (HLR) coordinates substrate. N-linked (GlcNAc...) asparagine glycosylation is found at Asn405, Asn406, and Asn564.

The protein belongs to the glycosyltransferase GT106 family.

The protein resides in the membrane. It participates in glycan metabolism. The protein is O-fucosyltransferase 11 of Arabidopsis thaliana (Mouse-ear cress).